We begin with the raw amino-acid sequence, 216 residues long: Leucyl/phenylalanyl-tRNA--protein transferase (216 aa).

The protein belongs to the L/F-transferase family.

It localises to the cytoplasm. The catalysed reaction is N-terminal L-lysyl-[protein] + L-leucyl-tRNA(Leu) = N-terminal L-leucyl-L-lysyl-[protein] + tRNA(Leu) + H(+). It carries out the reaction N-terminal L-arginyl-[protein] + L-leucyl-tRNA(Leu) = N-terminal L-leucyl-L-arginyl-[protein] + tRNA(Leu) + H(+). The enzyme catalyses L-phenylalanyl-tRNA(Phe) + an N-terminal L-alpha-aminoacyl-[protein] = an N-terminal L-phenylalanyl-L-alpha-aminoacyl-[protein] + tRNA(Phe). Functions in the N-end rule pathway of protein degradation where it conjugates Leu, Phe and, less efficiently, Met from aminoacyl-tRNAs to the N-termini of proteins containing an N-terminal arginine or lysine. The chain is Leucyl/phenylalanyl-tRNA--protein transferase from Maricaulis maris (strain MCS10) (Caulobacter maris).